We begin with the raw amino-acid sequence, 136 residues long: Phosphoribosyl-AMP cyclohydrolase (136 aa).

Asp89 contacts Mg(2+). Position 90 (Cys90) interacts with Zn(2+). Mg(2+) contacts are provided by Asp91 and Asp93. Cys106 and Cys113 together coordinate Zn(2+).

Belongs to the PRA-CH family. As to quaternary structure, homodimer. Mg(2+) is required as a cofactor. The cofactor is Zn(2+).

It localises to the cytoplasm. The enzyme catalyses 1-(5-phospho-beta-D-ribosyl)-5'-AMP + H2O = 1-(5-phospho-beta-D-ribosyl)-5-[(5-phospho-beta-D-ribosylamino)methylideneamino]imidazole-4-carboxamide. It functions in the pathway amino-acid biosynthesis; L-histidine biosynthesis; L-histidine from 5-phospho-alpha-D-ribose 1-diphosphate: step 3/9. Its function is as follows. Catalyzes the hydrolysis of the adenine ring of phosphoribosyl-AMP. This Bifidobacterium longum subsp. infantis (strain ATCC 15697 / DSM 20088 / JCM 1222 / NCTC 11817 / S12) protein is Phosphoribosyl-AMP cyclohydrolase.